The following is a 449-amino-acid chain: Phosphoglucosamine mutase (449 aa).

S100 serves as the catalytic Phosphoserine intermediate. Residues S100, D241, D243, and D245 each contribute to the Mg(2+) site. S100 carries the phosphoserine modification.

This sequence belongs to the phosphohexose mutase family. The cofactor is Mg(2+). In terms of processing, activated by phosphorylation.

The catalysed reaction is alpha-D-glucosamine 1-phosphate = D-glucosamine 6-phosphate. Catalyzes the conversion of glucosamine-6-phosphate to glucosamine-1-phosphate. This is Phosphoglucosamine mutase from Geobacillus kaustophilus (strain HTA426).